The primary structure comprises 105 residues: Met repressor (105 aa).

Belongs to the MetJ family. In terms of assembly, homodimer.

It localises to the cytoplasm. In terms of biological role, this regulatory protein, when combined with SAM (S-adenosylmethionine) represses the expression of the methionine regulon and of enzymes involved in SAM synthesis. The chain is Met repressor from Serratia proteamaculans (strain 568).